The following is a 260-amino-acid chain: UPF0246 protein Cbei_1739 (260 aa).

This sequence belongs to the UPF0246 family.

The protein is UPF0246 protein Cbei_1739 of Clostridium beijerinckii (strain ATCC 51743 / NCIMB 8052) (Clostridium acetobutylicum).